The chain runs to 419 residues: L-rhamnose isomerase (419 aa).

Mn(2+)-binding residues include His-262, Asp-294, and Asp-296.

It belongs to the rhamnose isomerase family. As to quaternary structure, homotetramer. Mn(2+) serves as cofactor.

The protein localises to the cytoplasm. It carries out the reaction L-rhamnopyranose = L-rhamnulose. It functions in the pathway carbohydrate degradation; L-rhamnose degradation; glycerone phosphate from L-rhamnose: step 1/3. Functionally, catalyzes the interconversion of L-rhamnose and L-rhamnulose. This is L-rhamnose isomerase from Escherichia coli (strain SMS-3-5 / SECEC).